We begin with the raw amino-acid sequence, 840 residues long: Cullin-4 (840 aa).

A compositionally biased stretch (polar residues) spans 1 to 11 (MTSGAPPTIST). The disordered stretch occupies residues 1–82 (MTSGAPPTIS…TGNSSRTTAT (82 aa)). Residues 33–48 (TEAKQMRGDTENRSDG) show a composition bias toward basic and acidic residues. Polar residues predominate over residues 69–82 (FRSQTGNSSRTTAT). The Cullin neddylation domain maps to 772–831 (DRQYKIDAAVVRIMKARKQLNHQTLMTELLQQLRFPVSTADIKKRLESLIEREYISRDPE). A Glycyl lysine isopeptide (Lys-Gly) (interchain with G-Cter in NEDD8) cross-link involves residue Lys786.

Belongs to the cullin family. In terms of assembly, part of an E3 ubiquitin-protein ligase complex including cul-4 and ddb-1. Post-translationally, neddylated. Deneddylated via its interaction with the COP9 signalosome (CSN) complex.

It functions in the pathway protein modification; protein ubiquitination. Component of cullin-based E3 ubiquitin-protein ligase complexes which mediate the ubiquitination and subsequent proteasomal degradation of target proteins. The functional specificity of the E3 ubiquitin-protein ligase complex depends on the variable substrate recognition component. In association with ddb-1 directs ubiquitination of cdt-1 during S phase and is required for restraining DNA rereplication. Probably is involved in ubiquitination of cki-1. The sequence is that of Cullin-4 (cul-4) from Caenorhabditis elegans.